A 236-amino-acid chain; its full sequence is Small ribosomal subunit protein uS3 (236 aa).

The region spanning 39–107 (IREFLTEELK…DTSLNIVEVR (69 aa)) is the KH type-2 domain. Positions 214 to 236 (ASERRAVEGDNQGSSSNRRRENA) are disordered.

It belongs to the universal ribosomal protein uS3 family. Part of the 30S ribosomal subunit. Forms a tight complex with proteins S10 and S14.

Binds the lower part of the 30S subunit head. Binds mRNA in the 70S ribosome, positioning it for translation. The polypeptide is Small ribosomal subunit protein uS3 (Brucella suis (strain ATCC 23445 / NCTC 10510)).